The primary structure comprises 242 residues: UPF0173 metal-dependent hydrolase Rxyl_1261 (242 aa).

It belongs to the UPF0173 family.

In Rubrobacter xylanophilus (strain DSM 9941 / JCM 11954 / NBRC 16129 / PRD-1), this protein is UPF0173 metal-dependent hydrolase Rxyl_1261.